Reading from the N-terminus, the 112-residue chain is ATP-dependent Clp protease adapter protein ClpS (112 aa).

The protein belongs to the ClpS family. In terms of assembly, binds to the N-terminal domain of the chaperone ClpA.

In terms of biological role, involved in the modulation of the specificity of the ClpAP-mediated ATP-dependent protein degradation. The polypeptide is ATP-dependent Clp protease adapter protein ClpS (Rhodococcus jostii (strain RHA1)).